Reading from the N-terminus, the 454-residue chain is tRNA modification GTPase MnmE (454 aa).

Arg23, Glu80, and Lys120 together coordinate (6S)-5-formyl-5,6,7,8-tetrahydrofolate. The TrmE-type G domain occupies 216–377 (GMKVVIAGRP…LRNHLKQSMG (162 aa)). Position 226 (Asn226) interacts with K(+). Residues 226 to 231 (NAGKSS), 245 to 251 (TDIAGTT), 270 to 273 (DTAG), 335 to 338 (NKAD), and 358 to 360 (SAR) contribute to the GTP site. Ser230 serves as a coordination point for Mg(2+). 3 residues coordinate K(+): Thr245, Ile247, and Thr250. Thr251 provides a ligand contact to Mg(2+). Lys454 provides a ligand contact to (6S)-5-formyl-5,6,7,8-tetrahydrofolate.

It belongs to the TRAFAC class TrmE-Era-EngA-EngB-Septin-like GTPase superfamily. TrmE GTPase family. In terms of assembly, homodimer. Heterotetramer of two MnmE and two MnmG subunits. K(+) serves as cofactor.

Its subcellular location is the cytoplasm. Exhibits a very high intrinsic GTPase hydrolysis rate. Involved in the addition of a carboxymethylaminomethyl (cmnm) group at the wobble position (U34) of certain tRNAs, forming tRNA-cmnm(5)s(2)U34. The sequence is that of tRNA modification GTPase MnmE from Escherichia coli O17:K52:H18 (strain UMN026 / ExPEC).